We begin with the raw amino-acid sequence, 326 residues long: Olfactory receptor 11H12 (326 aa).

The Extracellular segment spans residues 1–44 (MCPLTLQVTGLMNVSEPNSSFAFVNEFILQGFTCEWTIQIFLFS). Asn-13 and Asn-18 each carry an N-linked (GlcNAc...) asparagine glycan. The helical transmembrane segment at 45–65 (LFTTTYALTITGNGAIAFVLW) threads the bilayer. The Cytoplasmic segment spans residues 66–72 (CDWRLHT). Residues 73 to 93 (PMYMFLGNFSFLEIWYVSSTV) form a helical membrane-spanning segment. Topologically, residues 94–112 (PKMLVNFLSEKKNISFAGC) are extracellular. Asn-106 is a glycosylation site (N-linked (GlcNAc...) asparagine). A disulfide bond links Cys-112 and Cys-194. A helical transmembrane segment spans residues 113 to 133 (FLQFYFFFSLGTSECLLLTVM). Over 134–158 (AFDQYLAICRPLLYPNIMTGHLCAK) the chain is Cytoplasmic. A helical transmembrane segment spans residues 159 to 179 (LVILCWVCGFLWFLIPIVLIS). Residues 180–216 (QMPFCGPNIIDHVVCDPGPRFALDCVSAPRIQLFCYT) lie on the Extracellular side of the membrane. Residues 217–237 (LSSLVIFGNFLFIIGSYTLVL) traverse the membrane as a helical segment. Residues 238–259 (KAVLGMPSSTGRHKAFSTCGSH) lie on the Cytoplasmic side of the membrane. A helical membrane pass occupies residues 260-280 (LAVVSLCYSSLMVMYVSPGLG). Topologically, residues 281-287 (HSTGMQK) are extracellular. A helical membrane pass occupies residues 288–308 (IETLFYAMVTPLFNPLIYSLQ). Residues 309-326 (NKEIKAALRKVLGSSNII) lie on the Cytoplasmic side of the membrane.

Belongs to the G-protein coupled receptor 1 family.

The protein localises to the cell membrane. Functionally, odorant receptor. This is Olfactory receptor 11H12 (OR11H12) from Homo sapiens (Human).